The chain runs to 299 residues: Tyrosine recombinase XerC (299 aa).

In terms of domain architecture, Core-binding (CB) spans 1 to 85; it reads MKRQLEAYCA…AVRGLYRYLN (85 aa). In terms of domain architecture, Tyr recombinase spans 106-285; that stretch reads RLPKVLDTDR…DFQHLAAVYD (180 aa). Catalysis depends on residues Arg-146, Lys-170, His-237, Arg-240, and His-263. Residue Tyr-272 is the O-(3'-phospho-DNA)-tyrosine intermediate of the active site.

The protein belongs to the 'phage' integrase family. XerC subfamily. Forms a cyclic heterotetrameric complex composed of two molecules of XerC and two molecules of XerD.

It localises to the cytoplasm. Site-specific tyrosine recombinase, which acts by catalyzing the cutting and rejoining of the recombining DNA molecules. The XerC-XerD complex is essential to convert dimers of the bacterial chromosome into monomers to permit their segregation at cell division. It also contributes to the segregational stability of plasmids. This Pseudomonas putida (strain ATCC 700007 / DSM 6899 / JCM 31910 / BCRC 17059 / LMG 24140 / F1) protein is Tyrosine recombinase XerC.